The following is a 471-amino-acid chain: Phosphatidylinositol 4-kinase type 2-alpha (471 aa).

2 disordered regions span residues Met-1–Pro-25 and Pro-48–Pro-101. Basic and acidic residues predominate over residues Ala-90–Pro-101. Residues Asp-117–Thr-445 enclose the PI3K/PI4K catalytic domain. A G-loop region spans residues Ile-123 to Gly-129. ATP contacts are provided by residues Ser-124–Ser-130 and Lys-145. The interval Glu-150 to Tyr-152 is important for substrate binding. The important for interaction with membranes stretch occupies residues Lys-158–Cys-171. S-palmitoyl cysteine attachment occurs at residues Cys-167, Cys-168, Cys-170, and Cys-171. Gln-254–Val-257 provides a ligand contact to ATP. An important for interaction with membranes region spans residues Lys-261–Arg-269. The interval Arg-298–Asn-306 is catalytic loop. Positions Ala-336–Phe-356 are activation loop. Residue Asp-338 coordinates ATP. Positions Trp-351–Trp-360 are important for interaction with membranes.

This sequence belongs to the PI3/PI4-kinase family. Type II PI4K subfamily.

It is found in the golgi apparatus. The protein resides in the trans-Golgi network membrane. The protein localises to the membrane raft. It localises to the endosome. Its subcellular location is the endosome membrane. It is found in the cytoplasmic vesicle. The protein resides in the cell projection. The protein localises to the dendrite. It localises to the presynaptic cell membrane. Its subcellular location is the synapse. It is found in the synaptosome. The protein resides in the mitochondrion. The protein localises to the membrane. It localises to the cell membrane. Its subcellular location is the perikaryon. It is found in the neuron projection. The catalysed reaction is a 1,2-diacyl-sn-glycero-3-phospho-(1D-myo-inositol) + ATP = a 1,2-diacyl-sn-glycero-3-phospho-(1D-myo-inositol 4-phosphate) + ADP + H(+). Membrane-bound phosphatidylinositol-4 kinase (PI4-kinase) that catalyzes the phosphorylation of phosphatidylinositol (PI) to phosphatidylinositol 4-phosphate (PI4P), a lipid that plays important roles in endocytosis, Golgi function, protein sorting and membrane trafficking. Besides, phosphorylation of phosphatidylinositol (PI) to phosphatidylinositol 4-phosphate (PI4P) is the first committed step in the generation of phosphatidylinositol 4,5-bisphosphate (PIP2), a precursor of the second messenger inositol 1,4,5-trisphosphate (InsP3). This chain is Phosphatidylinositol 4-kinase type 2-alpha (pi4k2a), found in Xenopus tropicalis (Western clawed frog).